A 462-amino-acid chain; its full sequence is Cysteine--tRNA ligase (462 aa).

Cys-30 contacts Zn(2+). The short motif at Met-32 to His-42 is the 'HIGH' region element. Zn(2+)-binding residues include Cys-214, His-239, and Glu-243. Residues Lys-271 to Ser-275 carry the 'KMSKS' region motif. Lys-274 lines the ATP pocket.

This sequence belongs to the class-I aminoacyl-tRNA synthetase family. Monomer. The cofactor is Zn(2+).

It is found in the cytoplasm. The enzyme catalyses tRNA(Cys) + L-cysteine + ATP = L-cysteinyl-tRNA(Cys) + AMP + diphosphate. This chain is Cysteine--tRNA ligase, found in Cupriavidus taiwanensis (strain DSM 17343 / BCRC 17206 / CCUG 44338 / CIP 107171 / LMG 19424 / R1) (Ralstonia taiwanensis (strain LMG 19424)).